The chain runs to 381 residues: Chaperone protein DnaJ (381 aa).

The 66-residue stretch at 5–70 folds into the J domain; sequence DYYDVLGVSK…EKKAAYDRFG (66 aa). A CR-type zinc finger spans residues 140-218; that stretch reads GLQKTINVPT…CRGQGRVEKD (79 aa). Zn(2+)-binding residues include Cys-153, Cys-156, Cys-170, Cys-173, Cys-192, Cys-195, Cys-206, and Cys-209. CXXCXGXG motif repeat units lie at residues 153-160, 170-177, 192-199, and 206-213; these read CSSCEGTG, CPTCSGMG, CPTCSGLG, and CKSCRGQG.

This sequence belongs to the DnaJ family. Homodimer. The cofactor is Zn(2+).

Its subcellular location is the cytoplasm. Its function is as follows. Participates actively in the response to hyperosmotic and heat shock by preventing the aggregation of stress-denatured proteins and by disaggregating proteins, also in an autonomous, DnaK-independent fashion. Unfolded proteins bind initially to DnaJ; upon interaction with the DnaJ-bound protein, DnaK hydrolyzes its bound ATP, resulting in the formation of a stable complex. GrpE releases ADP from DnaK; ATP binding to DnaK triggers the release of the substrate protein, thus completing the reaction cycle. Several rounds of ATP-dependent interactions between DnaJ, DnaK and GrpE are required for fully efficient folding. Also involved, together with DnaK and GrpE, in the DNA replication of plasmids through activation of initiation proteins. The protein is Chaperone protein DnaJ of Ruegeria pomeroyi (strain ATCC 700808 / DSM 15171 / DSS-3) (Silicibacter pomeroyi).